Here is a 415-residue protein sequence, read N- to C-terminus: Diaminopimelate decarboxylase (415 aa).

The residue at position 60 (K60) is an N6-(pyridoxal phosphate)lysine. Residues G239 and 274–277 each bind pyridoxal 5'-phosphate; that span reads EPGR. 3 residues coordinate substrate: R277, R313, and Y317. C344 acts as the Proton donor in catalysis. Substrate-binding residues include E345 and Y372. Position 372 (Y372) interacts with pyridoxal 5'-phosphate.

This sequence belongs to the Orn/Lys/Arg decarboxylase class-II family. LysA subfamily. As to quaternary structure, homodimer. Pyridoxal 5'-phosphate serves as cofactor.

The enzyme catalyses meso-2,6-diaminopimelate + H(+) = L-lysine + CO2. It participates in amino-acid biosynthesis; L-lysine biosynthesis via DAP pathway; L-lysine from DL-2,6-diaminopimelate: step 1/1. Its function is as follows. Specifically catalyzes the decarboxylation of meso-diaminopimelate (meso-DAP) to L-lysine. This Haemophilus influenzae (strain ATCC 51907 / DSM 11121 / KW20 / Rd) protein is Diaminopimelate decarboxylase.